Reading from the N-terminus, the 273-residue chain is Putative ABC transporter ATP-binding protein DVU_1056 (273 aa).

Residues 10 to 242 form the ABC transporter domain; it reads LSLDDIHFTY…IHHGGEVAHE (233 aa). 44-51 lines the ATP pocket; the sequence is GHNGSGKT. Residues 234 to 273 form a disordered region; sequence HHGGEVAHEHPSRGCCHQHDGSHHHAGHDDDHPHTSQTTE. The span at 235 to 267 shows a compositional bias: basic and acidic residues; the sequence is HGGEVAHEHPSRGCCHQHDGSHHHAGHDDDHPH.

The protein belongs to the ABC transporter superfamily.

The protein resides in the cell inner membrane. Probably part of an ABC transporter complex. Responsible for energy coupling to the transport system. The sequence is that of Putative ABC transporter ATP-binding protein DVU_1056 from Nitratidesulfovibrio vulgaris (strain ATCC 29579 / DSM 644 / CCUG 34227 / NCIMB 8303 / VKM B-1760 / Hildenborough) (Desulfovibrio vulgaris).